A 212-amino-acid polypeptide reads, in one-letter code: Uridine kinase (212 aa).

Position 13–20 (13–20 (GGSGSGKT)) interacts with ATP.

It belongs to the uridine kinase family.

It localises to the cytoplasm. It catalyses the reaction uridine + ATP = UMP + ADP + H(+). It carries out the reaction cytidine + ATP = CMP + ADP + H(+). The protein operates within pyrimidine metabolism; CTP biosynthesis via salvage pathway; CTP from cytidine: step 1/3. Its pathway is pyrimidine metabolism; UMP biosynthesis via salvage pathway; UMP from uridine: step 1/1. The chain is Uridine kinase from Bacillus mycoides (strain KBAB4) (Bacillus weihenstephanensis).